A 494-amino-acid chain; its full sequence is Tyrosinase (494 aa).

Residues histidine 38, histidine 53, cysteine 64, histidine 224, histidine 228, and histidine 256 each contribute to the Cu cation site.

The protein belongs to the tyrosinase family. Cu(2+) serves as cofactor.

The catalysed reaction is 2 L-dopa + O2 = 2 L-dopaquinone + 2 H2O. The enzyme catalyses L-tyrosine + O2 = L-dopaquinone + H2O. The polypeptide is Tyrosinase (mepA) (Rhizobium meliloti (Ensifer meliloti)).